Consider the following 2904-residue polypeptide: Highly reducing polyketide synthase bet1 (2904 aa).

Positions 8-441 (NEPIAIVGSG…GTNAHAIVES (434 aa)) constitute a Ketosynthase family 3 (KS3) domain. Active-site for beta-ketoacyl synthase activity residues include Cys181, His320, and His361. Positions 553–875 (VFTGQGAQYA…PYHGTLLRGG (323 aa)) are acyl transferase (AT) domain. An N-terminal hotdog fold region spans residues 948-1081 (HQLLGDVSPD…GELKVVLVDE (134 aa)). Residues 948–1257 (HQLLGDVSPD…FKPVGSDASN (310 aa)) form the PKS/mFAS DH domain. The tract at residues 971-1255 (PREMTWLEGH…VKFKPVGSDA (285 aa)) is dehydratase (DH) domain. The active-site Proton acceptor; for dehydratase activity is the His980. The interval 1098 to 1257 (MIPVQPSRLY…FKPVGSDASN (160 aa)) is C-terminal hotdog fold. Asp1159 serves as the catalytic Proton donor; for dehydratase activity. Residues 1411–1596 (KQSTLWVASI…GFSGIDTMSP (186 aa)) form a methyltransferase (cMeT) domain region. The segment at 2125–2298 (TYWLVGLSGA…RSSVVNVGAI (174 aa)) is ketoreductase (KR)domain. Positions 2407 to 2486 (EVANVIKQAY…SLVELAAESI (80 aa)) constitute a Carrier domain. Position 2445 is an O-(pantetheine 4'-phosphoryl)serine (Ser2445). The interval 2492–2543 (PGVPQANANPNGPSSPDSDATESSNQNSDVDVTSTRATSPSTPAATSPDSNV) is disordered. Residues 2497 to 2523 (ANANPNGPSSPDSDATESSNQNSDVDV) show a composition bias toward polar residues. The segment covering 2524-2541 (TSTRATSPSTPAATSPDS) has biased composition (low complexity). The tract at residues 2585 to 2817 (LTGCSGLLGH…DLVSVETCCE (233 aa)) is reductase (R) domain.

Pantetheine 4'-phosphate is required as a cofactor.

The enzyme catalyses 7 malonyl-CoA + acetyl-CoA + 10 AH2 + 5 S-adenosyl-L-methionine + 2 H(+) = dehydroprobetaenone I + 10 A + 5 S-adenosyl-L-homocysteine + 7 CO2 + 8 CoA + 6 H2O. It functions in the pathway mycotoxin biosynthesis. Functionally, highly reducing polyketide synthase; part of the gene cluster that mediates the biosynthesis of betaenones, phytotoxic polyketides involved in leaf spot disease in sugar beets. The first step of the pathway is the synthesis of dehydroprobetaenone I by the polyketide synthase bet1 and the enoyl reductase bet3 via condensation of one acetyl-CoA starter unit with 7 malonyl-CoA units and 5 methylations. The C-terminal reductase (R) domain of bet1 catalyzes the reductive release of the polyketide chain. Because bet1 lacks a designated enoylreductase (ER) domain, the required activity is provided the enoyl reductase bet3. The short-chain dehydrogenase/reductase bet4 then catalyzes reduction of dehydroprobetaenone I to probetaenone I. The cytochrome P450 monooxygenase bet2 catalyzes successive epoxidation, oxidation (resulting from epoxide opening) and hydroxylation to install a tertiary alcohol in the decaline ring to yield betaenone C from dehydroprobetaenone I and betaenone B from probetaenone I. The FAD-linked oxidoreductase (orf1) is probably responsible for the conversion of betaenone C to betaenone A via an intramolecular aldol reaction between C-1 and C-17 to form the bridged tricyclic system in betaenone A. The chain is Highly reducing polyketide synthase bet1 from Neocamarosporium betae (Beet black rot fungus).